A 492-amino-acid chain; its full sequence is Gamma-aminobutyric acid receptor subunit alpha-3 (492 aa).

Positions 1–28 (MIITQMSQFYMAGLGLLFLINILPGTTG) are cleaved as a signal peptide. The Extracellular segment spans residues 29–274 (QVESRRQEPG…MTTHFHLKRK (246 aa)). N-linked (GlcNAc...) asparagine glycosylation is present at Asn63. Arg119 is a 4-aminobutanoate binding site. Asn163 and Asn176 each carry an N-linked (GlcNAc...) asparagine glycan. Thr182 serves as a coordination point for 4-aminobutanoate. A disulfide bridge connects residues Cys191 and Cys205. The N-linked (GlcNAc...) asparagine glycan is linked to Asn228. The chain crosses the membrane as a helical span at residues 275 to 295 (IGYFVIQTYLPCIMTVILSQV). The Cytoplasmic portion of the chain corresponds to 296 to 305 (SFWLNRESVP). Residues 306 to 325 (ARTVFGVTTVLTMTTLSISA) form a helical membrane-spanning segment. Residues 326–336 (RNSLPKVAYAT) lie on the Extracellular side of the membrane. Residues 337-357 (AMDWFMAVCYAFVFSALIEFA) traverse the membrane as a helical segment. Residues 358-457 (TVNYFTKRSW…TYNSVSKVDK (100 aa)) are Cytoplasmic-facing. Ser426 is modified (phosphoserine). The residue at position 427 (Thr427) is a Phosphothreonine. Ser433 carries the post-translational modification Phosphoserine. The chain crosses the membrane as a helical span at residues 458–478 (ISRIIFPVLFAIFNLVYWATY). The Extracellular portion of the chain corresponds to 479–492 (VNRESAIKGMIRKQ).

This sequence belongs to the ligand-gated ion channel (TC 1.A.9) family. Gamma-aminobutyric acid receptor (TC 1.A.9.5) subfamily. GABRA3 sub-subfamily. In terms of assembly, heteropentamer, formed by a combination of alpha (GABRA1-6), beta (GABRB1-3), gamma (GABRG1-3), delta (GABRD), epsilon (GABRE), rho (GABRR1-3), pi (GABRP) and theta (GABRQ) chains, each subunit exhibiting distinct physiological and pharmacological properties. Binds UBQLN1. Interacts with GPHN.

The protein localises to the postsynaptic cell membrane. It localises to the cell membrane. The enzyme catalyses chloride(in) = chloride(out). In terms of biological role, alpha subunit of the heteropentameric ligand-gated chloride channel gated by gamma-aminobutyric acid (GABA), a major inhibitory neurotransmitter in the brain. GABA-gated chloride channels, also named GABA(A) receptors (GABAAR), consist of five subunits arranged around a central pore and contain GABA active binding site(s) located at the alpha and beta subunit interface(s). When activated by GABA, GABAARs selectively allow the flow of chloride anions across the cell membrane down their electrochemical gradient. Chloride influx into the postsynaptic neuron following GABAAR opening decreases the neuron ability to generate a new action potential, thereby reducing nerve transmission. This chain is Gamma-aminobutyric acid receptor subunit alpha-3 (GABRA3), found in Bos taurus (Bovine).